A 204-amino-acid chain; its full sequence is Urease accessory protein UreG (204 aa).

11–18 is a binding site for GTP; that stretch reads GPVGAGKT.

This sequence belongs to the SIMIBI class G3E GTPase family. UreG subfamily. As to quaternary structure, homodimer. UreD, UreF and UreG form a complex that acts as a GTP-hydrolysis-dependent molecular chaperone, activating the urease apoprotein by helping to assemble the nickel containing metallocenter of UreC. The UreE protein probably delivers the nickel.

It localises to the cytoplasm. In terms of biological role, facilitates the functional incorporation of the urease nickel metallocenter. This process requires GTP hydrolysis, probably effectuated by UreG. The polypeptide is Urease accessory protein UreG (Staphylococcus aureus (strain bovine RF122 / ET3-1)).